The sequence spans 347 residues: tRNA N6-adenosine threonylcarbamoyltransferase (347 aa).

Residues His111 and His115 each coordinate Fe cation. Substrate is bound by residues Leu134–Gly138, Asp167, Gly180, and Asn277. Asp305 is a binding site for Fe cation.

It belongs to the KAE1 / TsaD family. It depends on Fe(2+) as a cofactor.

It is found in the cytoplasm. It carries out the reaction L-threonylcarbamoyladenylate + adenosine(37) in tRNA = N(6)-L-threonylcarbamoyladenosine(37) in tRNA + AMP + H(+). Functionally, required for the formation of a threonylcarbamoyl group on adenosine at position 37 (t(6)A37) in tRNAs that read codons beginning with adenine. Is involved in the transfer of the threonylcarbamoyl moiety of threonylcarbamoyl-AMP (TC-AMP) to the N6 group of A37, together with TsaE and TsaB. TsaD likely plays a direct catalytic role in this reaction. This chain is tRNA N6-adenosine threonylcarbamoyltransferase, found in Ralstonia pickettii (strain 12J).